The chain runs to 494 residues: UPF0371 protein SSA_0208 (494 aa).

The protein belongs to the UPF0371 family.

This is UPF0371 protein SSA_0208 from Streptococcus sanguinis (strain SK36).